The following is a 65-amino-acid chain: Large ribosomal subunit protein bL35 (65 aa).

The protein belongs to the bacterial ribosomal protein bL35 family.

The sequence is that of Large ribosomal subunit protein bL35 from Nitrosomonas europaea (strain ATCC 19718 / CIP 103999 / KCTC 2705 / NBRC 14298).